Here is a 78-residue protein sequence, read N- to C-terminus: Small ribosomal subunit protein uS17 (78 aa).

The protein belongs to the universal ribosomal protein uS17 family. In terms of assembly, part of the 30S ribosomal subunit.

In terms of biological role, one of the primary rRNA binding proteins, it binds specifically to the 5'-end of 16S ribosomal RNA. In Parvibaculum lavamentivorans (strain DS-1 / DSM 13023 / NCIMB 13966), this protein is Small ribosomal subunit protein uS17.